Here is a 324-residue protein sequence, read N- to C-terminus: Malate dehydrogenase (324 aa).

NAD(+) is bound by residues 20 to 25 (GAGNVG) and D44. Residues R93 and R99 each contribute to the substrate site. Residues N106 and 129–131 (VTN) contribute to the NAD(+) site. N131 and R162 together coordinate substrate. The Proton acceptor role is filled by H186.

It belongs to the LDH/MDH superfamily. MDH type 3 family.

It catalyses the reaction (S)-malate + NAD(+) = oxaloacetate + NADH + H(+). Catalyzes the reversible oxidation of malate to oxaloacetate. The sequence is that of Malate dehydrogenase from Synechocystis sp. (strain ATCC 27184 / PCC 6803 / Kazusa).